Consider the following 392-residue polypeptide: Lipid-A-disaccharide synthase (392 aa).

This sequence belongs to the LpxB family.

It carries out the reaction a lipid X + a UDP-2-N,3-O-bis[(3R)-3-hydroxyacyl]-alpha-D-glucosamine = a lipid A disaccharide + UDP + H(+). Its pathway is bacterial outer membrane biogenesis; LPS lipid A biosynthesis. Its function is as follows. Condensation of UDP-2,3-diacylglucosamine and 2,3-diacylglucosamine-1-phosphate to form lipid A disaccharide, a precursor of lipid A, a phosphorylated glycolipid that anchors the lipopolysaccharide to the outer membrane of the cell. This is Lipid-A-disaccharide synthase from Syntrophotalea carbinolica (strain DSM 2380 / NBRC 103641 / GraBd1) (Pelobacter carbinolicus).